Reading from the N-terminus, the 369-residue chain is UDP-N-acetylenolpyruvoylglucosamine reductase (369 aa).

Positions 29–202 (VGPIARRVIT…LEVEFALDPS (174 aa)) constitute an FAD-binding PCMH-type domain. R176 is a catalytic residue. S257 functions as the Proton donor in the catalytic mechanism. E361 is a catalytic residue.

Belongs to the MurB family. The cofactor is FAD.

Its subcellular location is the cytoplasm. It catalyses the reaction UDP-N-acetyl-alpha-D-muramate + NADP(+) = UDP-N-acetyl-3-O-(1-carboxyvinyl)-alpha-D-glucosamine + NADPH + H(+). Its pathway is cell wall biogenesis; peptidoglycan biosynthesis. Functionally, cell wall formation. The sequence is that of UDP-N-acetylenolpyruvoylglucosamine reductase from Mycobacterium tuberculosis (strain ATCC 25177 / H37Ra).